The primary structure comprises 62 residues: Photosystem II reaction center protein Z (62 aa).

2 helical membrane-spanning segments follow: residues 8-28 (AVFA…LVFA) and 41-61 (FSGT…NSLI).

The protein belongs to the PsbZ family. As to quaternary structure, PSII is composed of 1 copy each of membrane proteins PsbA, PsbB, PsbC, PsbD, PsbE, PsbF, PsbH, PsbI, PsbJ, PsbK, PsbL, PsbM, PsbT, PsbY, PsbZ, Psb30/Ycf12, at least 3 peripheral proteins of the oxygen-evolving complex and a large number of cofactors. It forms dimeric complexes.

The protein resides in the plastid. It localises to the chloroplast thylakoid membrane. May control the interaction of photosystem II (PSII) cores with the light-harvesting antenna, regulates electron flow through the 2 photosystem reaction centers. PSII is a light-driven water plastoquinone oxidoreductase, using light energy to abstract electrons from H(2)O, generating a proton gradient subsequently used for ATP formation. In Hordeum vulgare (Barley), this protein is Photosystem II reaction center protein Z.